The primary structure comprises 209 residues: MSNPRVEELPDEEPKKTTVQEHEDDSSDDSEVEEVGEGQLPAGSTVIHNRNEKKARKALEKLHLTRIPGITRVTLRRPKNILFVINTPEVYKSPNSNTYIVFGEAKIEDVNAAAQQAAAAQLASQNAEDHSGHNHGEPSKAVEADEKKEDKEDDEDEEEEEEEEVDASGLEDKDIELVMTQANVSRNKAVKALKENDNDIVNSIMALSI.

The segment covering 1 to 21 has biased composition (basic and acidic residues); the sequence is MSNPRVEELPDEEPKKTTVQE. Disordered regions lie at residues 1–51 and 121–175; these read MSNP…HNRN and QLAS…DKDI. Over residues 22 to 36 the composition is skewed to acidic residues; that stretch reads HEDDSSDDSEVEEVG. Residues 49-114 enclose the NAC-A/B domain; that stretch reads NRNEKKARKA…AKIEDVNAAA (66 aa). The span at 127 to 150 shows a compositional bias: basic and acidic residues; it reads AEDHSGHNHGEPSKAVEADEKKED. The span at 151-166 shows a compositional bias: acidic residues; it reads KEDDEDEEEEEEEEVD. The UBA domain maps to 170–209; it reads LEDKDIELVMTQANVSRNKAVKALKENDNDIVNSIMALSI.

Belongs to the NAC-alpha family. In terms of assembly, part of the nascent polypeptide-associated complex (NAC), consisting of EGD2 and EGD1. NAC associates with ribosomes via EGD1.

The protein localises to the cytoplasm. The protein resides in the nucleus. Its function is as follows. Component of the nascent polypeptide-associated complex (NAC), a dynamic component of the ribosomal exit tunnel, protecting the emerging polypeptides from interaction with other cytoplasmic proteins to ensure appropriate nascent protein targeting. The NAC complex also promotes mitochondrial protein import by enhancing productive ribosome interactions with the outer mitochondrial membrane and blocks the inappropriate interaction of ribosomes translating non-secretory nascent polypeptides with translocation sites in the membrane of the endoplasmic reticulum. EGD2 may also be involved in transcription regulation. The protein is Nascent polypeptide-associated complex subunit alpha (EGD2) of Gibberella zeae (strain ATCC MYA-4620 / CBS 123657 / FGSC 9075 / NRRL 31084 / PH-1) (Wheat head blight fungus).